Reading from the N-terminus, the 265-residue chain is Flagellar brake protein YcgR (265 aa).

The 118-residue stretch at Gln-135–Arg-252 folds into the PilZ domain.

This sequence belongs to the YcgR family. As to quaternary structure, monomer. Interacts with the flagellar basal bodies.

The protein localises to the bacterial flagellum basal body. In terms of biological role, acts as a flagellar brake, regulating swimming and swarming in a bis-(3'-5') cyclic diguanylic acid (c-di-GMP)-dependent manner. Binds 1 c-di-GMP dimer per subunit. Increasing levels of c-di-GMP lead to decreased motility. This is Flagellar brake protein YcgR from Xanthomonas campestris pv. campestris (strain B100).